A 282-amino-acid chain; its full sequence is MMPFLLIDFPAFKPIAIEIGPFAIRWYALAYICGIVFGWLYARSLLKNERLWGGPAPISLVQVDDFILWVTLGIILGGRTGYVLFYNLPFFIEHPAAIFRLWEGGMSFHGGFLGCVVAVMWFAYRNGIPILSLGDITTAVAPVGLLLGRIANFINGELWGRATDASLPWAMVFPNDPTQLPRHPSQLYEAGMEGILLFTVLAIMIRLGALKRPGMILGAFILIYGLTRIAGEHFREPDVQLGFLWGGLTMGMLLSIPMLIVGLILIVLAIRRGAPRPIEAIR.

The next 3 membrane-spanning stretches (helical) occupy residues 19 to 39 (IGPFAIRWYALAYICGIVFGW), 58 to 78 (ISLVQVDDFILWVTLGIILGG), and 104 to 124 (GGMSFHGGFLGCVVAVMWFAY). Residue arginine 149 coordinates a 1,2-diacyl-sn-glycero-3-phospho-(1'-sn-glycerol). A run of 3 helical transmembrane segments spans residues 190-210 (AGMEGILLFTVLAIMIRLGAL), 214-234 (GMILGAFILIYGLTRIAGEHF), and 250-270 (MGMLLSIPMLIVGLILIVLAI).

Belongs to the Lgt family.

It is found in the cell inner membrane. It carries out the reaction L-cysteinyl-[prolipoprotein] + a 1,2-diacyl-sn-glycero-3-phospho-(1'-sn-glycerol) = an S-1,2-diacyl-sn-glyceryl-L-cysteinyl-[prolipoprotein] + sn-glycerol 1-phosphate + H(+). It functions in the pathway protein modification; lipoprotein biosynthesis (diacylglyceryl transfer). In terms of biological role, catalyzes the transfer of the diacylglyceryl group from phosphatidylglycerol to the sulfhydryl group of the N-terminal cysteine of a prolipoprotein, the first step in the formation of mature lipoproteins. The chain is Phosphatidylglycerol--prolipoprotein diacylglyceryl transferase from Bradyrhizobium diazoefficiens (strain JCM 10833 / BCRC 13528 / IAM 13628 / NBRC 14792 / USDA 110).